Reading from the N-terminus, the 342-residue chain is Arginase 1, mitochondrial (342 aa).

Residues 1–22 (MSRIIGRKGINYIHRLNSASFT) constitute a mitochondrion transit peptide. L-ornithine contacts are provided by residues Ser77 and 96 to 99 (GSTN). Residues His161, Asp185, His187, and Asp189 each contribute to the Mn(2+) site. 189–191 (DIY) contributes to the L-ornithine binding site. 195 to 197 (EGN) lines the substrate pocket. Ser224 provides a ligand contact to L-ornithine. Asp270 and Asp272 together coordinate Mn(2+). Glu313 is a binding site for substrate.

Belongs to the arginase family. In terms of assembly, forms homohexamers. Mn(2+) serves as cofactor. As to expression, expressed in vasculature of roots, root tips, cotyledons, leaves, cauline leaves, stems, sepals and pollen.

The protein resides in the mitochondrion. It catalyses the reaction L-arginine + H2O = urea + L-ornithine. The enzyme catalyses agmatine + H2O = urea + putrescine. The protein operates within nitrogen metabolism; urea cycle; L-ornithine and urea from L-arginine: step 1/1. It participates in amine and polyamine biosynthesis; putrescine biosynthesis via agmatine pathway; putrescine from agmatine: step 1/1. Its function is as follows. Catalyzes the hydrolysis of L-arginine to urea and L-ornithine. The latter can be utilized in the urea cycle or as a precursor for the synthesis of both polyamines and proline. Possesses agmatinase activity. Catalyzes the formation of putrescine from agmatine. The protein is Arginase 1, mitochondrial of Arabidopsis thaliana (Mouse-ear cress).